The following is a 652-amino-acid chain: Probable potassium transport system protein Kup (652 aa).

Positions 1–20 are enriched in low complexity; that stretch reads MSNDTSPGTSSVDSKSSDPS. The interval 1–26 is disordered; that stretch reads MSNDTSPGTSSVDSKSSDPSYGVPGH. 12 helical membrane-spanning segments follow: residues 36 to 56, 76 to 96, 125 to 145, 161 to 181, 193 to 213, 228 to 248, 270 to 290, 314 to 334, 362 to 382, 391 to 411, 419 to 439, and 444 to 464; these read LSLGAIGIVFGDIGTSPLYAL, LVSLIFWTMGLVVTVKYVMFI, WLIVLGVFATALFYGDSMITP, PSFDSWVPPVSVVILIGLFCI, FGPIMLVYFATLAILGAFNII, AIHFFASDPLQGFWALGSVVL, LGWYWVVFPALTLNYLGQCAL, LIILATFAAVIASQAVITGAF, IYIPSVNWVLMFMVMVLIAMF, AYGIAVTGTMFITSCMMGVLV, AWQSIPLVSFFLLIDGAFFLS, and IPEGGWFPLLVGFVVFTMLMT.

Belongs to the HAK/KUP transporter (TC 2.A.72) family.

The protein localises to the cell inner membrane. It carries out the reaction K(+)(in) + H(+)(in) = K(+)(out) + H(+)(out). Functionally, transport of potassium into the cell. Likely operates as a K(+):H(+) symporter. In Zymomonas mobilis subsp. mobilis (strain ATCC 31821 / ZM4 / CP4), this protein is Probable potassium transport system protein Kup.